A 307-amino-acid chain; its full sequence is 4-hydroxythreonine-4-phosphate dehydrogenase (307 aa).

Substrate-binding residues include histidine 126 and threonine 127. Residues histidine 156, histidine 195, and histidine 251 each contribute to the a divalent metal cation site. Substrate is bound by residues lysine 259, asparagine 268, and arginine 277.

This sequence belongs to the PdxA family. In terms of assembly, homodimer. The cofactor is Zn(2+). Mg(2+) is required as a cofactor. It depends on Co(2+) as a cofactor.

It localises to the cytoplasm. It carries out the reaction 4-(phosphooxy)-L-threonine + NAD(+) = 3-amino-2-oxopropyl phosphate + CO2 + NADH. It functions in the pathway cofactor biosynthesis; pyridoxine 5'-phosphate biosynthesis; pyridoxine 5'-phosphate from D-erythrose 4-phosphate: step 4/5. Functionally, catalyzes the NAD(P)-dependent oxidation of 4-(phosphooxy)-L-threonine (HTP) into 2-amino-3-oxo-4-(phosphooxy)butyric acid which spontaneously decarboxylates to form 3-amino-2-oxopropyl phosphate (AHAP). The chain is 4-hydroxythreonine-4-phosphate dehydrogenase from Helicobacter pylori (strain Shi470).